Here is a 796-residue protein sequence, read N- to C-terminus: Peroxisome proliferator-activated receptor gamma coactivator 1-alpha (796 aa).

Residue lysine 77 is modified to N6-acetyllysine. Residues 98–138 (PVDEDGLPSFDALTDGDVTTENEASPSSMPDGTPPPQEAEE) form a disordered region. Polar residues predominate over residues 114 to 127 (DVTTENEASPSSMP). The LXXLL motif signature appears at 142 to 146 (LKKLL). Lysine 144 carries the N6-acetyllysine modification. Phosphothreonine; by AMPK is present on threonine 176. Lysine 182 is modified (N6-acetyllysine). Residues 211–275 (YLTTNDDPPH…NDPKGSPFEN (65 aa)) are disordered. A compositionally biased stretch (basic and acidic residues) spans 217 to 235 (DPPHTKPTENRNSSRDKCT). Residues 242–258 (TQSQTQHLQAKPTTLSL) are compositionally biased toward polar residues. N6-acetyllysine is present on residues lysine 252, lysine 269, lysine 276, and lysine 319. 2 disordered regions span residues 288-374 (GTAG…AKRP) and 398-452 (TSQE…RKQL). Positions 291-337 (GLTPPTTPPHKANQDNPFRASPKLKPSCKTVVPPPSKKARYSESSCT) are interaction with PPARG. The segment covering 332–344 (SESSCTQGSNSTK) has biased composition (polar residues). N6-acetyllysine is present on residues lysine 345 and lysine 411. The interval 348-796 (EQSELYAQLS…LKEAQRSLRR (449 aa)) is mediates interaction with RNF34. Basic and acidic residues predominate over residues 401–412 (ELHDSRQLENKD). Composition is skewed to polar residues over residues 413–428 (APSSNGPGQIHSSTDS) and 439–450 (VSRQVSPGSTRK). N6-acetyllysine is present on lysine 450. Serine 538 is subject to Phosphoserine; by AMPK. 3 disordered regions span residues 542-597 (FNSP…SSSR), 609-637 (HRTHRNSPLCASRSRSPHSRRPRYDSYEE), and 648-667 (YRREYEKRESERAKQRERQR). Residues 562-577 (QRMRSRSRSFSRHRSC) are compositionally biased toward basic residues. Over residues 578 to 597 (SRSPYSRSRSRSPGSRSSSR) the composition is skewed to low complexity. The RRM domain occupies 675-751 (RVIYVGKIRP…TDFELYFCGR (77 aa)). N6-acetyllysine occurs at positions 756 and 777.

As to quaternary structure, homooligomer. Interacts with MYBBP1A; inhibits MYBBP1A transcriptional activation. Interacts with PRDM16, LPIN1 and PML. Interacts (via LXXLL motif) with RORA and RORC (via AF-2 motif); activates RORA and RORC transcriptional activation. Interacts with LRPPRC. Interacts with FOXO1. Interacts with NR5A2. Phosphorylation by AMPK in skeletal muscle increases activation of its own promoter. Phosphorylated by CLK2. Post-translationally, heavily acetylated by KAT2A/GCN5 under conditions of high nutrients, leading to inactivation of PPARGC1A. Deacetylated by SIRT1 in low nutrients/high NAD conditions, leading to its activation. In terms of processing, ubiquitinated. Ubiquitination by RNF34 induces proteasomal degradation.

It is found in the nucleus. It localises to the PML body. Its function is as follows. Transcriptional coactivator for steroid receptors and nuclear receptors. Greatly increases the transcriptional activity of PPARG and thyroid hormone receptor on the uncoupling protein promoter. Can regulate key mitochondrial genes that contribute to the program of adaptive thermogenesis. Plays an essential role in metabolic reprogramming in response to dietary availability through coordination of the expression of a wide array of genes involved in glucose and fatty acid metabolism. Acts as a key regulator of gluconeogenesis: stimulates hepatic gluconeogenesis by increasing the expression of gluconeogenic enzymes, and acting together with FOXO1 to promote the fasting gluconeogenic program. Induces the expression of PERM1 in the skeletal muscle in an ESRRA-dependent manner. Also involved in the integration of the circadian rhythms and energy metabolism. Required for oscillatory expression of clock genes, such as BMAL1 and NR1D1, through the coactivation of RORA and RORC, and metabolic genes, such as PDK4 and PEPCK. The chain is Peroxisome proliferator-activated receptor gamma coactivator 1-alpha (PPARGC1A) from Bos taurus (Bovine).